The following is a 405-amino-acid chain: Potassium channel subfamily K member 13 (405 aa).

Over 1–19 the chain is Cytoplasmic; sequence MAGRGCSCSPGHLNEDNAR. A helical membrane pass occupies residues 20 to 40; that stretch reads FLLLAGLILLYLLGGAAVFSA. N-linked (GlcNAc...) asparagine glycosylation is found at Asn59 and Asn65. Residues 95–115 constitute an intramembrane region (pore-forming); sequence WDFTGAFYFVGTVVTTIGFGM. Residues Thr110, Ile111, and Gly112 each contribute to the K(+) site. Residues 110-115 are selectivity filter 1; that stretch reads TIGFGM. A helical transmembrane segment spans residues 125 to 145; that stretch reads VFLIFYGLIGCASTILFFNLF. Residues 146–193 are Cytoplasmic-facing; that stretch reads LERLITVIAYVMRTCHHQQLRRRGTVARDNRKAPRKGEADSLAGWKPS. A helical transmembrane segment spans residues 194 to 214; that stretch reads VYYVMLILCLASVAISCGASA. Residues 224–244 constitute an intramembrane region (pore-forming); sequence YFDSVYFCFVASSTIGFGDLV. Thr237, Ile238, Gly239, and Phe240 together coordinate K(+). Positions 237–242 are selectivity filter 2; the sequence is TIGFGD. The chain crosses the membrane as a helical span at residues 263-283; it reads FFILMGVCCIYSMFNVISILI. Over 284–405 the chain is Cytoplasmic; the sequence is KQTVNWILRK…NRLAETSGDR (122 aa).

This sequence belongs to the two pore domain potassium channel (TC 1.A.1.8) family. In terms of assembly, homodimer. Heterodimer with KCNK12. Ubiquitous. In brain expression is rather low and restricted to the olfactory bulb and tubercle, to the ventromedial hypothalamic nucleus, lateral septal nucleus dorsal, lateral mammillary nucleus, lateral parabrachial nuclei, reticular nucleus and reunions nuclei.

The protein localises to the cell membrane. The enzyme catalyses K(+)(in) = K(+)(out). The channel currents are activated by arachidonic acid, inhibited by volatile anesthetic halothane, partially inhibited by Ba(2+) ions and only weakly inhibited by extracellular acidification to pH 6. Its function is as follows. K(+) channel that conducts outward rectifying tonic currents potentiated by purinergic signals. Homo- and heterodimerizes to form functional channels with distinct regulatory and gating properties. Contributes most of K(+) currents at the plasma membrane of resting microglia. Maintains a depolarized membrane potential required for proper ramified microglia morphology and phagocytosis, selectively mediating microglial pruning of presynaptic compartments at hippocampal excitatory synapses. Upon local release of ATP caused by neuronal injury or infection, it is potentiated by P2RY12 and P2RX7 receptor signaling and contributes to ATP-triggered K(+) efflux underlying microglial NLRP3 inflammasome assembly and IL1B release. This Rattus norvegicus (Rat) protein is Potassium channel subfamily K member 13.